We begin with the raw amino-acid sequence, 451 residues long: Uronate isomerase (451 aa).

It belongs to the metallo-dependent hydrolases superfamily. Uronate isomerase family.

The catalysed reaction is D-glucuronate = D-fructuronate. It carries out the reaction aldehydo-D-galacturonate = keto-D-tagaturonate. The protein operates within carbohydrate metabolism; pentose and glucuronate interconversion. The protein is Uronate isomerase of Thermotoga sp. (strain RQ2).